The chain runs to 556 residues: Set1/Ash2 histone methyltransferase complex subunit ASH2 (556 aa).

The segment covering 1 to 19 has biased composition (polar residues); it reads MEDSQMDTSSPTESSSEVN. The disordered stretch occupies residues 1-27; sequence MEDSQMDTSSPTESSSEVNFTAEEDKS. The segment at 34–90 adopts a PHD-type zinc-finger fold; that stretch reads AGVCYCGKERNLNIVELLCATCSRWVHETCVSYQLGKGKLLPFITNYVFVCKNCSAS. Zn(2+) contacts are provided by cysteine 37, cysteine 39, cysteine 52, cysteine 55, histidine 60, cysteine 63, cysteine 84, and cysteine 87. The segment at 216-251 is disordered; the sequence is ASLSKNNRQKRKFPGTDSGPTGKKGRPSSDITANVK. Positions 288 to 510 constitute a B30.2/SPRY domain; it reads SSDWAGKPIP…VSVNFGPAFK (223 aa).

Core component of several methyltransferase-containing complexes. Component of the SET1C/COMPASS complex, composed at least of the catalytic subunit Set1, wds/WDR5, Wdr82, Rbbp5, ash2, Cfp1/CXXC1, hcf and Dpy-30L1. Component of the MLL3/4 (Histone-lysine N-methyltransferase/demethylase TRR) complex composed at least of the catalytic subunit trr, ash2, Rbbp5, Dpy-30L1, wds, hcf, ptip, Pa1, Utx, Lpt and Ncoa6. Interacts with hcf. Interacts with trr. As to quaternary structure, interacts (via B30.2/SPRY domain) with sktl; the interaction is direct. As to expression, in larvae and pupae, expressed in imaginal disks, salivary gland and fat body cells. No expression detected in central nervous system (at protein level).

The protein resides in the nucleus. The protein localises to the chromosome. Functionally, transcriptional regulator. Regulates a number of genes involved in wing development including activation of net and bs and repression of rho and kni and controls vein-intervein patterning during wing development. Required for correct expression of a number of homeotic genes including Scr in the first leg imaginal disk and Ubx in the third leg imaginal disk and haltere disks. Required for stabilization of the histone-lysine N-methyltransferase trr and for trimethylation of 'Lys-4' of histone H3. Together with sktl probably plays a role in maintenance of transcriptionally active chromatin through down-regulation of histone H1 hyperphosphorylation. This Drosophila melanogaster (Fruit fly) protein is Set1/Ash2 histone methyltransferase complex subunit ASH2.